The primary structure comprises 202 residues: Dephospho-CoA kinase (202 aa).

Residues 3–202 (TIGITGGIGS…TKRPNPPDRL (200 aa)) enclose the DPCK domain. Residue 11-16 (GSGKSV) coordinates ATP. Positions 138–161 (RAMARDGSSAETMRQRMLSQEREQ) are disordered.

It belongs to the CoaE family.

Its subcellular location is the cytoplasm. The catalysed reaction is 3'-dephospho-CoA + ATP = ADP + CoA + H(+). Its pathway is cofactor biosynthesis; coenzyme A biosynthesis; CoA from (R)-pantothenate: step 5/5. Catalyzes the phosphorylation of the 3'-hydroxyl group of dephosphocoenzyme A to form coenzyme A. The polypeptide is Dephospho-CoA kinase (Porphyromonas gingivalis (strain ATCC BAA-308 / W83)).